The primary structure comprises 423 residues: uncharacterized protein (423 aa).

3 residues coordinate substrate: Ser51, Asp138, and Asn150. Residues 170–171 and 214–220 contribute to the ATP site; these read TD and TGGMRTK. In terms of domain architecture, PUA spans 315–406; sequence KGAIIIDENS…EKIHDVLGYS (92 aa).

It belongs to the glutamate 5-kinase family.

Its subcellular location is the cytoplasm. This is an uncharacterized protein from Saccharomyces cerevisiae (strain ATCC 204508 / S288c) (Baker's yeast).